A 740-amino-acid chain; its full sequence is MTENHDAIVTDAKSEGSGGCPVAHDRALHPTQGGGNRQWWPERLNLKILAKNPAVANPLDEDFDYAEAFKALDLAAVKRDIAEVLTTSQDWWPADFGNYGPLMIRMAWHSAGTYRISDGRGGAGAGQQRFAPLNSWPDNGNLDKARRLLWPVKKKYGQSISWADLLILTGNVALETMGFKTFGFGGGRADVWEAEEDVYWGPETTWLDDRRYTGDRELENPLGAVQMGLIYVNPEGPNGNPDPIAAARDIRETFRRMAMNDEETVALIAGGHTFGKTHGAGPADHVGADPEAASLEEQGLGWRSTYGTGKGADAITSGLEVTWTSTPTQWSNGFFKNLFEYEYELEQSPAGAHQWVAKNAPEIIPDAHDPSKKHRPRMLTTDLSLRFDPIYEPISRRFYENPEEFADAFARAWYKLTHRDMGPKSLYLGPEVPEETLLWQDPLPEREGELIDDADIAILKTKLLESGLSVSQLVTTAWASASTFRASDKRGGANGARIRLAPQRGWEVNDPDQLAQVLRTLENVQQEFNASSGAKKVSLADLIVLGGAAGVEKAAKEAGFEIQVPFTPGRVDATEEHTDVESFEALEPTADGFRNYLGKGNRLPAEYLLLDKANLLNLSAPEMTVLVGGLRVLGANHQQSQLGVFTKTPGVLTNDFFVNLLDMGTTWKATSEDQTTFEGRDAATGEVKWAGSRADLVFGSNSELRALAEVYASDDAKEKFVKDFVAAWHKVMDADRFDLV.

The span at Met-1–Ser-14 shows a compositional bias: basic and acidic residues. Positions Met-1 to Pro-21 are disordered. Positions Trp-108–Tyr-231 form a cross-link, tryptophyl-tyrosyl-methioninium (Trp-Tyr) (with M-257). The active-site Proton acceptor is the His-109. Residues Tyr-231–Met-257 constitute a cross-link (tryptophyl-tyrosyl-methioninium (Tyr-Met) (with W-108)). His-272 is a heme b binding site.

Belongs to the peroxidase family. Peroxidase/catalase subfamily. In terms of assembly, homodimer. The cofactor is heme b. Post-translationally, formation of the three residue Trp-Tyr-Met cross-link is important for the catalase, but not the peroxidase activity of the enzyme.

It catalyses the reaction H2O2 + AH2 = A + 2 H2O. The catalysed reaction is 2 H2O2 = O2 + 2 H2O. Bifunctional enzyme with both catalase and broad-spectrum peroxidase activity. The protein is Catalase-peroxidase of Streptomyces reticuli.